Consider the following 562-residue polypeptide: MFS-type transporter calB (562 aa).

Over residues 1-16 (MDEVTRTAQRSPSITE) the composition is skewed to polar residues. The interval 1–45 (MDEVTRTAQRSPSITETHAGETKLAGPGEKEGDVESPVDPSADSE) is disordered. The chain crosses the membrane as a helical span at residues 57–77 (FAILASVTLSAFLMLLDGSII). N-linked (GlcNAc...) asparagine glycosylation is present at asparagine 83. Helical transmembrane passes span 94–113 (IGWY…PLSG), 123–143 (WTYL…GVAN), 154–174 (VAGL…AGAV), 184–204 (GIYL…GGAL), 213–233 (CFYI…FLQV), 256–276 (LIGF…LYYG), 284–304 (SSQV…FALW), 329–349 (INGA…PIYF), 362–382 (VNTL…GVLV), 389–409 (LPFA…VTLF), 418–438 (WIGY…MGII), 451–471 (VGIA…VVVG), and 530–550 (VFYL…GMGW). Asparagine 557 carries an N-linked (GlcNAc...) asparagine glycan.

Belongs to the major facilitator superfamily. TCR/Tet family.

It localises to the cell membrane. In terms of biological role, MFS-type transporter; part of the gene cluster that mediates the biosynthesis of calbistrin A and related compounds. Calbistrin A is a secondary metabolite with an interesting structure that was recently found to have bioactivity against leukemia cells. It consists of two polyketides linked by an ester bond: a bicyclic decalin containing polyketide and a linear 12 carbon dioic acid structure. Required for the secretion of calbistrin A and calbistrin C, as well as of related compounds decumbenone A, B and C. This chain is MFS-type transporter calB, found in Penicillium decumbens.